We begin with the raw amino-acid sequence, 416 residues long: 3-oxoacyl-[acyl-carrier-protein] synthase 1 (416 aa).

The Ketosynthase family 3 (KS3) domain occupies 11–415 (FPSVVVTAVT…GHNVALAFGR (405 aa)). Catalysis depends on for beta-ketoacyl synthase activity residues cysteine 171, histidine 311, and histidine 345. Substrate-binding residues include histidine 311 and histidine 345.

Belongs to the thiolase-like superfamily. Beta-ketoacyl-ACP synthases family.

The protein resides in the cytoplasm. It catalyses the reaction an ultra-long-chain mono-unsaturated fatty acyl-[ACP] + malonyl-[ACP] + H(+) = a 3-oxo-ultra-long-chain mono-unsaturated fatty acyl-[ACP] + holo-[ACP] + CO2. The protein operates within lipid metabolism; mycolic acid biosynthesis. Its function is as follows. Part of the mycobacterial fatty acid elongation system FAS-II, which is involved in mycolic acid biosynthesis. Catalyzes the elongation of long chain acyl-ACP substrates by the addition of two carbons from malonyl-ACP to an acyl acceptor. Involved in the initial extension of the mycolate chain and forms monounsaturated fatty acids that averaged 40 carbons in length. This chain is 3-oxoacyl-[acyl-carrier-protein] synthase 1 (kasA), found in Mycobacterium leprae (strain TN).